Reading from the N-terminus, the 405-residue chain is Prostaglandin E2 receptor EP1 subtype (405 aa).

Topologically, residues 1–39 (MSPCGLNLSLADEAATCATPRLPNTSVVLPTGDNGTSPA) are extracellular. N-linked (GlcNAc...) asparagine glycosylation is found at asparagine 7, asparagine 24, and asparagine 34. A helical transmembrane segment spans residues 40 to 62 (LPIFSMTLGAVSNVLALALLAQV). Residues 63-80 (AGRMRRRRSAATFLLFVA) lie on the Cytoplasmic side of the membrane. The helical transmembrane segment at 81–99 (SLLAIDLAGHVIPGALVLR) threads the bilayer. At 100–113 (LYTAGRAPAGGACH) the chain is on the extracellular side. The cysteines at positions 112 and 190 are disulfide-linked. A helical transmembrane segment spans residues 114–135 (FLGGCMVFFGLCPLLLGCGMAV). Topologically, residues 136–157 (ERCVGVTQPLIHAARVSVARAR) are cytoplasmic. The chain crosses the membrane as a helical span at residues 158–179 (LALAVLAAMALAVALLPLVHVG). Over 180–202 (RYELQYPGTWCFISLGPRGGWRQ) the chain is Extracellular. A helical membrane pass occupies residues 203 to 228 (ALLAGLFAGLGLAALLAALVCNTLSG). Topologically, residues 229–301 (LALLRARWRR…HAHDVEMVGQ (73 aa)) are cytoplasmic. The disordered stretch occupies residues 243 to 287 (RFRKTAGPDDRRRWGSRGPRLASASSASSITSATATLRSSRGGGS). Low complexity predominate over residues 262 to 282 (RLASASSASSITSATATLRSS). A helical transmembrane segment spans residues 302–323 (LVGIMVVSCICWSPLLVLVVLA). Residues 324-337 (IGGWNSNSLQRPLF) are Extracellular-facing. Residues 338-357 (LAVRLASWNQILDPWVYILL) form a helical membrane-spanning segment. At 358-405 (RQAMLRQLLRLLPLRVSAKGGPTELGLTKSAWEASSLRSSRHSGFSHL) the chain is on the cytoplasmic side.

Belongs to the G-protein coupled receptor 1 family. In terms of processing, phosphorylated. In terms of tissue distribution, abundant in kidney and in a lesser amount in lung.

The protein localises to the cell membrane. Receptor for prostaglandin E2 (PGE2). The activity of this receptor is mediated by G(q) proteins which activate a phosphatidylinositol-calcium second messenger system. May play a role as an important modulator of renal function. Implicated the smooth muscle contractile response to PGE2 in various tissues. The sequence is that of Prostaglandin E2 receptor EP1 subtype (Ptger1) from Mus musculus (Mouse).